The sequence spans 353 residues: Ferredoxin--NADP reductase (353 aa).

The FAD site is built by D47, Q55, Y60, V100, F135, D299, and S340.

It belongs to the ferredoxin--NADP reductase type 2 family. As to quaternary structure, homodimer. It depends on FAD as a cofactor.

It catalyses the reaction 2 reduced [2Fe-2S]-[ferredoxin] + NADP(+) + H(+) = 2 oxidized [2Fe-2S]-[ferredoxin] + NADPH. In Paraburkholderia xenovorans (strain LB400), this protein is Ferredoxin--NADP reductase.